Consider the following 498-residue polypeptide: ATP synthase subunit beta, chloroplastic (498 aa).

Glycine 172–threonine 179 is a binding site for ATP.

It belongs to the ATPase alpha/beta chains family. In terms of assembly, F-type ATPases have 2 components, CF(1) - the catalytic core - and CF(0) - the membrane proton channel. CF(1) has five subunits: alpha(3), beta(3), gamma(1), delta(1), epsilon(1). CF(0) has four main subunits: a(1), b(1), b'(1) and c(9-12).

Its subcellular location is the plastid. The protein localises to the chloroplast thylakoid membrane. It catalyses the reaction ATP + H2O + 4 H(+)(in) = ADP + phosphate + 5 H(+)(out). Functionally, produces ATP from ADP in the presence of a proton gradient across the membrane. The catalytic sites are hosted primarily by the beta subunits. This Buxus microphylla (Littleleaf boxwood) protein is ATP synthase subunit beta, chloroplastic.